A 674-amino-acid chain; its full sequence is L-type lectin-domain containing receptor kinase IV.3 (674 aa).

The first 22 residues, 1-22 (MFFKLFTIFFFFIILLSKPLNS), serve as a signal peptide directing secretion. Asn-21, Asn-28, Asn-40, Asn-81, Asn-136, and Asn-188 each carry an N-linked (GlcNAc...) asparagine glycan. Over 23 to 296 (SSQSLNFTYN…TSLQRFYKNR (274 aa)) the chain is Extracellular. Residues 26–263 (SLNFTYNSFH…SEHFVFGWSF (238 aa)) form a legume-lectin like region. A helical membrane pass occupies residues 297-317 (MPLFSLLLIPVLFVVSLIFLV). Residues 318–674 (RFIVRRRRKF…IAYSIVSGGR (357 aa)) are Cytoplasmic-facing. Positions 355-632 (FKDKDLLGSG…LQYLRGDATL (278 aa)) constitute a Protein kinase domain. ATP is bound by residues 361–369 (LGSGGFGRV) and Lys-384. Residue Asp-480 is the Proton acceptor of the active site.

This sequence in the C-terminal section; belongs to the protein kinase superfamily. Ser/Thr protein kinase family. It in the N-terminal section; belongs to the leguminous lectin family.

The protein localises to the cell membrane. The enzyme catalyses L-seryl-[protein] + ATP = O-phospho-L-seryl-[protein] + ADP + H(+). It carries out the reaction L-threonyl-[protein] + ATP = O-phospho-L-threonyl-[protein] + ADP + H(+). The chain is L-type lectin-domain containing receptor kinase IV.3 (LECRK43) from Arabidopsis thaliana (Mouse-ear cress).